Reading from the N-terminus, the 382-residue chain is Ribosomal RNA large subunit methyltransferase G (382 aa).

The protein belongs to the methyltransferase superfamily. RlmG family.

The protein localises to the cytoplasm. It carries out the reaction guanosine(1835) in 23S rRNA + S-adenosyl-L-methionine = N(2)-methylguanosine(1835) in 23S rRNA + S-adenosyl-L-homocysteine + H(+). Its function is as follows. Specifically methylates the guanine in position 1835 (m2G1835) of 23S rRNA. In Psychromonas ingrahamii (strain DSM 17664 / CCUG 51855 / 37), this protein is Ribosomal RNA large subunit methyltransferase G.